We begin with the raw amino-acid sequence, 398 residues long: Acetyl-CoA acetyltransferase (398 aa).

At Ser2 the chain carries N-acetylserine. Cys91 serves as the catalytic Acyl-thioester intermediate. CoA is bound by residues Tyr186 and Lys231. Tyr186 contacts K(+). Positions 248, 249, and 251 each coordinate K(+). A CoA-binding site is contributed by Ser252. Residue Val350 coordinates K(+). Residues His354 and Cys384 each act as proton acceptor in the active site.

It belongs to the thiolase-like superfamily. Thiolase family. In terms of assembly, homotetramer.

It is found in the cytoplasm. The protein localises to the cytosol. The catalysed reaction is 2 acetyl-CoA = acetoacetyl-CoA + CoA. Its pathway is metabolic intermediate biosynthesis; (R)-mevalonate biosynthesis; (R)-mevalonate from acetyl-CoA: step 1/3. In terms of biological role, acetyl-CoA acetyltransferase; part of the first module of ergosterol biosynthesis pathway that includes the early steps of the pathway, conserved across all eukaryotes, and which results in the formation of mevalonate from acetyl-coenzyme A (acetyl-CoA). ERG10 catalyzes the formation of acetoacetyl-CoA from acetyl-CoA. The first module starts with the action of the cytosolic acetyl-CoA acetyltransferase ERG10 that catalyzes the formation of acetoacetyl-CoA. The hydroxymethylglutaryl-CoA synthase ERG13 then condenses acetyl-CoA with acetoacetyl-CoA to form HMG-CoA. The rate-limiting step of the early module is the reduction to mevalonate by the 3-hydroxy-3-methylglutaryl-coenzyme A (HMG-CoA) reductases HMG1 and HMG2 which are derived from a single ancestral HMGR gene by gene duplication. The sequence is that of Acetyl-CoA acetyltransferase from Saccharomyces cerevisiae (strain ATCC 204508 / S288c) (Baker's yeast).